A 319-amino-acid polypeptide reads, in one-letter code: Ubiquinone biosynthesis protein COQ9, mitochondrial (319 aa).

Residues 1-45 (MAATVAFSGVLRRAGWRLLQLRCLPVPRCRPALAPRAFRASAMQL) constitute a mitochondrion transit peptide. Residues 17-32 (RLLQLRCLPVPRCRPA) carry the SIFI-degron motif. The tract at residues 46 to 99 (RSLDQQKDQPPPSSSQQQSEAQGAEEPNPEALRSPPRYTDQGGEEEEDYESEEQ) is disordered. Positions 87–98 (GGEEEEDYESEE) are enriched in acidic residues. At Lys-176 the chain carries N6-acetyllysine. Arg-245 contacts a 1,2-diacylglycero-3-phosphoethanolamine.

This sequence belongs to the COQ9 family. In terms of assembly, homodimer. Heterodimer; two heterodimers of COQ7:COQ9 come together on the same side of the lipid pseudo-bilayer and form a curved tetramer with a hydrophobic surface suitable for membrane interaction. These two tetramers assemble into a soluble octamer with a pseudo-bilayer of lipids captured within. Interacts with COQ7; this interaction allows ubiquinone (CoQ) isoprene intermediates presentation to COQ7 and facilitates the COQ7-mediated hydroxylase step. In response to mitochondrial stress, the precursor protein is ubiquitinated by the SIFI complex in the cytoplasm before mitochondrial import, leading to its degradation. Within the SIFI complex, UBR4 initiates ubiquitin chain that are further elongated or branched by KCMF1.

The protein resides in the mitochondrion. Its pathway is cofactor biosynthesis; ubiquinone biosynthesis. Membrane-associated protein that warps the membrane surface to access and bind aromatic isoprenes with high specificity, including ubiquinone (CoQ) isoprene intermediates and presents them directly to COQ7, therefore facilitating the COQ7-mediated hydroxylase step. Participates in the biosynthesis of coenzyme Q, also named ubiquinone, an essential lipid-soluble electron transporter for aerobic cellular respiration. This chain is Ubiquinone biosynthesis protein COQ9, mitochondrial, found in Bos taurus (Bovine).